A 173-amino-acid polypeptide reads, in one-letter code: Placenta-specific protein 1 (173 aa).

An N-terminal signal peptide occupies residues 1–23 (MNLRKFLGGTVLVAFMLFSYSEQ).

It belongs to the PLAC1 family. In terms of tissue distribution, expressed in placenta.

The protein localises to the secreted. Functionally, may play a role in placental development. The polypeptide is Placenta-specific protein 1 (Mus musculus (Mouse)).